We begin with the raw amino-acid sequence, 87 residues long: MSNFSGFTKGTDIADLDAVAQTLKKPADDANKAVNDSIAALKDKPDNPALLADLQHSINKWSVIYNINSTIVRSMKDLMQGILQKFP.

The protein belongs to the SctF family. In terms of assembly, the core secretion machinery of the T3SS is composed of approximately 20 different proteins, including cytoplasmic components, a base, an export apparatus and a needle. This subunit polymerizes and forms the helical needle filament. Forms high-order oligomers in vitro. Forms a stable ternary complex with the YscE-YscG chaperone. Interacts directly with YscG but makes very little direct contact with YscE. Interacts with the needle adapter protein YscI/SctI.

Its subcellular location is the secreted. It is found in the cell surface. The secretion and/or polymerization may be controlled by the type III secretion system regulator YopR. Interaction with YscE-YscG chaperone prevents premature polymerization of YscF/SctF in the bacterial cytosol and is required for its stability and efficient secretion. Interaction with the needle adapter protein YscI/SctI is required for YscF/SctF secretion, needle assembly and Yop secretion. The N-terminus varies among bacterial species, not only in amino acid composition but also in the number of amino acids, and may function in manipulating the host response to the advantage of the bacteria. In Y.pestis, the N-terminus can function to decrease cytokine induction, perhaps contributing to a favorable immune environment leading to survival of Y.pestis within the eukaryotic host. Functionally, component of the type III secretion system (T3SS), also called injectisome, which is used to inject bacterial effector proteins into eukaryotic host cells. YscF/SctF forms the external needle filament that protrudes from the bacterial surface. Essential for the calcium-dependent regulation of T3SS and Yop secretion. Required to block Yop secretion in the presence of extracellular calcium. May be the extracellular T3SS component that senses extracellular calcium and/or participates in transmitting the calcium signal to the cytoplasmic compartment where the block in secretion is initiated. Its function is as follows. During infection, can induce innate immune responses. The needle proteins interact with host TLR2 or TLR4, and induce signaling by NF-kappa-B and/or AP-1. This activation is MyD88 dependent and results in increased expression of cytokines, including TNF-alpha, IL-6 and IL-8. Innate immune responses are modulated by the N-terminal region of YscF/SctF. The chain is Type 3 secretion system needle filament protein from Yersinia pestis.